We begin with the raw amino-acid sequence, 202 residues long: MSRYTGSIYKKSRRLGFSLLENNKEFNSGKKRTYGPGQHGNKKVKLSNYGQQLVEKQKLMFLYGLNDRQFRRLYRVALGRPGVLTLNLLQVLESRLDSLVYRAGFAPTRRAARQLVNHSHVLVNNKKVNIPSALVEVGSTIALKAKSLEIPLIKNTLNKPADFIELIDKEKKVAKLARLPERNELPADVNEAYVVEWYNRLM.

One can recognise an S4 RNA-binding domain in the interval 94–157 (SRLDSLVYRA…LEIPLIKNTL (64 aa)).

The protein belongs to the universal ribosomal protein uS4 family. Part of the 30S ribosomal subunit. Contacts protein S5. The interaction surface between S4 and S5 is involved in control of translational fidelity.

Its function is as follows. One of the primary rRNA binding proteins, it binds directly to 16S rRNA where it nucleates assembly of the body of the 30S subunit. Functionally, with S5 and S12 plays an important role in translational accuracy. The polypeptide is Small ribosomal subunit protein uS4 (Ureaplasma parvum serovar 3 (strain ATCC 27815 / 27 / NCTC 11736)).